Consider the following 315-residue polypeptide: Malate dehydrogenase (315 aa).

Residues 10–15 and Asp34 contribute to the NAD(+) site; that span reads GSGFTG. Residues Arg85 and Arg91 each contribute to the substrate site. Residues Asn98 and 121-123 contribute to the NAD(+) site; that span reads LTN. Asn123 and Arg154 together coordinate substrate. His178 serves as the catalytic Proton acceptor.

This sequence belongs to the LDH/MDH superfamily. MDH type 3 family.

It carries out the reaction (S)-malate + NAD(+) = oxaloacetate + NADH + H(+). In terms of biological role, catalyzes the reversible oxidation of malate to oxaloacetate. The sequence is that of Malate dehydrogenase from Symbiobacterium thermophilum (strain DSM 24528 / JCM 14929 / IAM 14863 / T).